We begin with the raw amino-acid sequence, 318 residues long: Olfactory receptor 10H1 (318 aa).

The Extracellular segment spans residues 1-25 (MQRANHSTVTQFILVGFSVFPHLQL). Asn5 carries N-linked (GlcNAc...) asparagine glycosylation. Residues 26–46 (MLFLLFLLMYLFTLLGNLLIM) form a helical membrane-spanning segment. At 47–54 (ATVWSERS) the chain is on the cytoplasmic side. A helical transmembrane segment spans residues 55-75 (LHTPMYLFLCALSVSEILYTV). The Extracellular portion of the chain corresponds to 76–99 (AIIPRMLADLLSTQRSIAFLACAS). Residues Cys97 and Cys189 are joined by a disulfide bond. A helical transmembrane segment spans residues 100-120 (QMFFSFSFGFTHSFLLTVMGY). Topologically, residues 121–139 (DRYVAICHPLRYNVLMSPR) are cytoplasmic. The chain crosses the membrane as a helical span at residues 140-160 (GCACLVGCSWAGGLVMGMVVT). At 161–197 (SAIFHLAFCGHKEIHHFACHVPPLLKLACGDDVLVVA) the chain is on the extracellular side. The chain crosses the membrane as a helical span at residues 198–218 (KGVGLVCITALLGCFLLILLS). Over 219 to 238 (YAFIVAAILKIPSAEGRNKA) the chain is Cytoplasmic. A helical membrane pass occupies residues 239-259 (FSTCASHLTVVVVHYGFASVI). Over 260–272 (YLKPKSPQSLEGD) the chain is Extracellular. Residues 273–293 (TLMGITYTVLTPFLSPIIFSL) traverse the membrane as a helical segment. Over 294–318 (RNKELKVAMKKTFFSKLYPEKNVMM) the chain is Cytoplasmic.

Belongs to the G-protein coupled receptor 1 family.

The protein resides in the cell membrane. In terms of biological role, odorant receptor. This chain is Olfactory receptor 10H1 (OR10H1), found in Homo sapiens (Human).